The following is a 270-amino-acid chain: Putative pyruvate, phosphate dikinase regulatory protein 2 (270 aa).

151 to 158 provides a ligand contact to ADP; it reads GVSRTSKT.

The protein belongs to the pyruvate, phosphate/water dikinase regulatory protein family. PDRP subfamily.

It catalyses the reaction N(tele)-phospho-L-histidyl/L-threonyl-[pyruvate, phosphate dikinase] + ADP = N(tele)-phospho-L-histidyl/O-phospho-L-threonyl-[pyruvate, phosphate dikinase] + AMP + H(+). The enzyme catalyses N(tele)-phospho-L-histidyl/O-phospho-L-threonyl-[pyruvate, phosphate dikinase] + phosphate + H(+) = N(tele)-phospho-L-histidyl/L-threonyl-[pyruvate, phosphate dikinase] + diphosphate. In terms of biological role, bifunctional serine/threonine kinase and phosphorylase involved in the regulation of the pyruvate, phosphate dikinase (PPDK) by catalyzing its phosphorylation/dephosphorylation. The chain is Putative pyruvate, phosphate dikinase regulatory protein 2 from Listeria welshimeri serovar 6b (strain ATCC 35897 / DSM 20650 / CCUG 15529 / CIP 8149 / NCTC 11857 / SLCC 5334 / V8).